We begin with the raw amino-acid sequence, 223 residues long: Ribose-5-phosphate isomerase A (223 aa).

Residues 32-35 (TGST), 85-88 (DGAD), and 98-101 (KGGG) contribute to the substrate site. Glu107 acts as the Proton acceptor in catalysis. Substrate is bound at residue Lys125.

Belongs to the ribose 5-phosphate isomerase family. Homodimer.

It carries out the reaction aldehydo-D-ribose 5-phosphate = D-ribulose 5-phosphate. The protein operates within carbohydrate degradation; pentose phosphate pathway; D-ribose 5-phosphate from D-ribulose 5-phosphate (non-oxidative stage): step 1/1. Catalyzes the reversible conversion of ribose-5-phosphate to ribulose 5-phosphate. The chain is Ribose-5-phosphate isomerase A from Pseudomonas fluorescens (strain ATCC BAA-477 / NRRL B-23932 / Pf-5).